The following is a 220-amino-acid chain: Metalloproteinase inhibitor 2 (220 aa).

An N-terminal signal peptide occupies residues 1 to 26 (MGAAARSLPLAFCLLLLGTLLPRADA). Cys-27 lines the Zn(2+) pocket. The interval 27–30 (CSCS) is involved in metalloproteinase-binding. 6 cysteine pairs are disulfide-bonded: Cys-27–Cys-98, Cys-29–Cys-127, Cys-39–Cys-152, Cys-154–Cys-201, Cys-159–Cys-164, and Cys-172–Cys-193. The 126-residue stretch at 27–152 (CSCSPVHPQQ…SLNHRYQMGC (126 aa)) folds into the NTR domain.

Belongs to the protease inhibitor I35 (TIMP) family. In terms of assembly, interacts (via the C-terminal) with MMP2 (via the C-terminal PEX domain); the interaction inhibits the MMP2 activity. In terms of processing, the activity of TIMP2 is dependent on the presence of disulfide bonds.

It is found in the secreted. Complexes with metalloproteinases (such as collagenases) and irreversibly inactivates them by binding to their catalytic zinc cofactor. The polypeptide is Metalloproteinase inhibitor 2 (TIMP2) (Bos taurus (Bovine)).